Consider the following 177-residue polypeptide: Novel acetylcholine receptor chaperone (177 aa).

At 1-5 (MASPR) the chain is on the cytoplasmic side. A helical membrane pass occupies residues 6–26 (TVTVVALSVALGLFFVFMGTI). The Lumenal portion of the chain corresponds to 27–61 (KLTPRLSKDAYSEMKRAYKSYVRALPLLKKMGINS). The tract at residues 43–54 (AYKSYVRALPLL) is interaction with NGFR. A helical transmembrane segment spans residues 62-82 (ILLRKSIGALEVACGIVMTLV). The Cytoplasmic portion of the chain corresponds to 83-88 (PGRPKD). Residues 89-109 (VANFFLLLLVLAVLFFHQLVG) traverse the membrane as a helical segment. At 110–114 (DPLKR) the chain is on the lumenal side. A helical membrane pass occupies residues 115-132 (YAHALVFGILLTCRLLIA). Residues 133 to 177 (RKPEDRSSEKKSSPPGNAGSDGNAGNTEEQPSLYEKAPQGKMKLS) lie on the Cytoplasmic side of the membrane. The interval 136–177 (EDRSSEKKSSPPGNAGSDGNAGNTEEQPSLYEKAPQGKMKLS) is disordered.

The protein belongs to the DoxX family. In terms of assembly, may interact with NGFR. Interacts with RPN1, RPN2 and CANX.

The protein resides in the peroxisome membrane. The protein localises to the cytoplasmic vesicle. It is found in the endoplasmic reticulum membrane. Its function is as follows. Molecular chaperone which mediates the proper assembly and functional expression of the nicotinic acetylcholine receptors (nAChRs) throughout the brain. Essential for the proper folding, assembly, function and surface trafficking of alpha-7 (CHRNA7), alpha-4-beta-2, alpha-3-beta-2 and alpha-3-beta-4 receptors. Stably associates with ribophorin-1 (RPN1) and ribophorin-2 (RPN2) (components of the oligosaccharyl transferase (OST) complex) and with calnexin (CANX), both of which are critical for NACHO-mediated effects on CHRNA7 assembly and function. Facilitates the proper folding and assembly of alpha-6-beta-2 and alpha-6-beta-2-beta-3 receptors and acts at early stages of the nAChRs subunit assembly. Promotes the expression of the alpha-4(2):beta-2(3) stoichiometric form over the alpha-4(3):beta-2(2) form. This chain is Novel acetylcholine receptor chaperone (TMEM35A), found in Bos taurus (Bovine).